A 249-amino-acid chain; its full sequence is ATP synthase subunit a (249 aa).

Helical transmembrane passes span 30–50 (QSPVMMIVASVLVLAFLYVGM), 86–106 (FFPFIFTLFFFILAGNYLGLL), 115–135 (HIAVTLALALLVFVLAVIVSL), 142–162 (FFAHFMPAGAPVALAPLLVPI), 191–211 (MFAAFTIMLAGLGLFGDVLAV), and 218–238 (VALMALELLVGALQAYVFAIL).

The protein belongs to the ATPase A chain family. As to quaternary structure, F-type ATPases have 2 components, CF(1) - the catalytic core - and CF(0) - the membrane proton channel. CF(1) has five subunits: alpha(3), beta(3), gamma(1), delta(1), epsilon(1). CF(0) has three main subunits: a(1), b(2) and c(9-12). The alpha and beta chains form an alternating ring which encloses part of the gamma chain. CF(1) is attached to CF(0) by a central stalk formed by the gamma and epsilon chains, while a peripheral stalk is formed by the delta and b chains.

It is found in the cell inner membrane. Key component of the proton channel; it plays a direct role in the translocation of protons across the membrane. The polypeptide is ATP synthase subunit a (Gluconacetobacter diazotrophicus (strain ATCC 49037 / DSM 5601 / CCUG 37298 / CIP 103539 / LMG 7603 / PAl5)).